A 283-amino-acid polypeptide reads, in one-letter code: Bifunctional protein FolD (283 aa).

166 to 168 serves as a coordination point for NADP(+); sequence GAS.

The protein belongs to the tetrahydrofolate dehydrogenase/cyclohydrolase family. Homodimer.

It catalyses the reaction (6R)-5,10-methylene-5,6,7,8-tetrahydrofolate + NADP(+) = (6R)-5,10-methenyltetrahydrofolate + NADPH. The catalysed reaction is (6R)-5,10-methenyltetrahydrofolate + H2O = (6R)-10-formyltetrahydrofolate + H(+). Its pathway is one-carbon metabolism; tetrahydrofolate interconversion. In terms of biological role, catalyzes the oxidation of 5,10-methylenetetrahydrofolate to 5,10-methenyltetrahydrofolate and then the hydrolysis of 5,10-methenyltetrahydrofolate to 10-formyltetrahydrofolate. This is Bifunctional protein FolD from Coxiella burnetii (strain CbuK_Q154) (Coxiella burnetii (strain Q154)).